A 351-amino-acid polypeptide reads, in one-letter code: Histidinol-phosphate aminotransferase 1 (351 aa).

K210 is subject to N6-(pyridoxal phosphate)lysine.

This sequence belongs to the class-II pyridoxal-phosphate-dependent aminotransferase family. Histidinol-phosphate aminotransferase subfamily. As to quaternary structure, homodimer. The cofactor is pyridoxal 5'-phosphate.

It carries out the reaction L-histidinol phosphate + 2-oxoglutarate = 3-(imidazol-4-yl)-2-oxopropyl phosphate + L-glutamate. The protein operates within amino-acid biosynthesis; L-histidine biosynthesis; L-histidine from 5-phospho-alpha-D-ribose 1-diphosphate: step 7/9. This Pseudomonas aeruginosa (strain ATCC 15692 / DSM 22644 / CIP 104116 / JCM 14847 / LMG 12228 / 1C / PRS 101 / PAO1) protein is Histidinol-phosphate aminotransferase 1 (hisC1).